Reading from the N-terminus, the 143-residue chain is Large-conductance mechanosensitive channel (143 aa).

A run of 2 helical transmembrane segments spans residues 19 to 39 (VGVI…ADVI) and 81 to 101 (GSFL…FLVV).

It belongs to the MscL family. In terms of assembly, homopentamer.

Its subcellular location is the cell inner membrane. Its function is as follows. Channel that opens in response to stretch forces in the membrane lipid bilayer. May participate in the regulation of osmotic pressure changes within the cell. The chain is Large-conductance mechanosensitive channel from Rhodopseudomonas palustris (strain HaA2).